The following is a 510-amino-acid chain: MIWHVQNENFILDSTRIFMKAFHLLFFDGSLIFPECILIFGLILLLMIDSTSDQKDIPWLYFISSTSLVMSITALLFRWREEPMISFSGNFQTNNFNEIFQFLILLCSTLCIPLSVEYIECTEMAITEFLLFVLTATIGGMFLCGANDLITIFVAPECFSLCSYLLSGYTKKDVRSNEATMKYLLMGGASSSILVHGFSWLYGSSGGEIELQEIVNGLINTQMYNSPGISIALIFITVGIGFKLSPAPSHQWTPDVYEGSPTPVVAFLSVTSKVAASASATRIFDIPFYFSSNEWHLLLEILAILSMILGNLIAITQTSMKRMLAYSSIGQIGYVIIGIIVGDSNDGYASMITYMLFYISMNLGTFACIVLFGLRTGTENIRDYAGLYTKDPFLALSLALCLLSLGGLPPLAGFFGKLYLFWCGWQAGLYFLVLIGLLTSVVSIYYYLKIIKLLMTGRNQEITPHVRNYRRSPLRSNNSIELSMIVCVIASTIPGISMNPIIAIAQDTLF.

Transmembrane regions (helical) follow at residues 24–44, 57–77, 99–119, 124–144, 149–169, 183–203, 227–247, 295–315, 323–343, 354–374, 395–415, 418–438, and 484–504; these read LLFF…GLIL, IPWL…ALLF, IFQF…VEYI, MAIT…MFLC, LITI…LSGY, YLLM…WLYG, PGIS…LSPA, WHLL…LIAI, MLAY…IVGD, YMLF…LFGL, ALSL…AGFF, LYLF…IGLL, and MIVC…IIAI.

Belongs to the complex I subunit 2 family. As to quaternary structure, NDH is composed of at least 16 different subunits, 5 of which are encoded in the nucleus.

It localises to the plastid. It is found in the chloroplast thylakoid membrane. It catalyses the reaction a plastoquinone + NADH + (n+1) H(+)(in) = a plastoquinol + NAD(+) + n H(+)(out). The catalysed reaction is a plastoquinone + NADPH + (n+1) H(+)(in) = a plastoquinol + NADP(+) + n H(+)(out). Functionally, NDH shuttles electrons from NAD(P)H:plastoquinone, via FMN and iron-sulfur (Fe-S) centers, to quinones in the photosynthetic chain and possibly in a chloroplast respiratory chain. The immediate electron acceptor for the enzyme in this species is believed to be plastoquinone. Couples the redox reaction to proton translocation, and thus conserves the redox energy in a proton gradient. The sequence is that of NAD(P)H-quinone oxidoreductase subunit 2 B, chloroplastic from Guizotia abyssinica (Niger).